The following is a 124-amino-acid chain: Tax1-binding protein 3 (124 aa).

An N-acetylserine modification is found at Ser2. Residues 15–112 form the PDZ domain; the sequence is RVEIHKLRQG…EVVRLLVTRQ (98 aa). Phosphoserine is present on Ser61.

In terms of assembly, interacts (via its PDZ domain) with GLS2. Interacts (via its PDZ domain) with RTKN (via the C-terminal region); this interaction facilitates Rho-mediated activation of the FOS serum response element (SRE). Interacts (via PDZ domain) with ARHGEF16. Interacts (via PDZ domain) with KCNJ4 (via C-terminus). Competes with LIN7A for KCNJ4 binding. Interacts (via its PDZ domain) with CTNNB1; this interaction inhibits the transcriptional activity of CTNNB1. Interacts with ADGRB2.

The protein localises to the cytoplasm. The protein resides in the nucleus. Its subcellular location is the cell membrane. May regulate a number of protein-protein interactions by competing for PDZ domain binding sites. Binds CTNNB1 and may thereby act as an inhibitor of the Wnt signaling pathway. Competes with LIN7A for KCNJ4 binding, and thereby promotes KCNJ4 internalization. May play a role in the Rho signaling pathway. The sequence is that of Tax1-binding protein 3 from Mus musculus (Mouse).